The chain runs to 366 residues: UDP-N-acetylenolpyruvoylglucosamine reductase (366 aa).

The region spanning 29-203 (VGPVARTLVT…LEVEFALDAS (175 aa)) is the FAD-binding PCMH-type domain. The active site involves R177. S258 serves as the catalytic Proton donor. E358 is a catalytic residue.

This sequence belongs to the MurB family. Requires FAD as cofactor.

It localises to the cytoplasm. It catalyses the reaction UDP-N-acetyl-alpha-D-muramate + NADP(+) = UDP-N-acetyl-3-O-(1-carboxyvinyl)-alpha-D-glucosamine + NADPH + H(+). It participates in cell wall biogenesis; peptidoglycan biosynthesis. Functionally, cell wall formation. The protein is UDP-N-acetylenolpyruvoylglucosamine reductase of Mycobacterium ulcerans (strain Agy99).